A 452-amino-acid polypeptide reads, in one-letter code: Photoreceptor ankyrin repeat protein (452 aa).

ANK repeat units lie at residues 94–123 (CRLG…SPEE), 130–160 (NGRT…DVNQ), 164–193 (GGDT…GLDL), and 223–257 (RGKT…QLSQ). 2 disordered regions span residues 335–369 (LGTR…SPWV) and 405–427 (SKAS…QSLA). The span at 349-362 (APPPPLVPQSPPGS) shows a compositional bias: pro residues. The segment covering 406-424 (KASSSSHQCQPKPSPSGHQ) has biased composition (polar residues).

It localises to the cytoplasm. Its subcellular location is the cytosol. It is found in the nucleus. Functionally, acts as a transcriptional repressor for CRX-activated photoreceptor gene regulation. In Homo sapiens (Human), this protein is Photoreceptor ankyrin repeat protein.